Reading from the N-terminus, the 264-residue chain is Small ribosomal subunit protein uS3 (264 aa).

The 69-residue stretch at 39–107 (VREFLKKKLK…PVHVNIEEIR (69 aa)) folds into the KH type-2 domain. The interval 211–264 (NDAPVVEEPQEERRKRPGRPEGRRREGEGRPGGQRRGAGAGGRRSGGADAKTGE) is disordered. Residues 221-239 (EERRKRPGRPEGRRREGEG) show a composition bias toward basic and acidic residues. Positions 240–255 (RPGGQRRGAGAGGRRS) are enriched in gly residues.

Belongs to the universal ribosomal protein uS3 family. As to quaternary structure, part of the 30S ribosomal subunit. Forms a tight complex with proteins S10 and S14.

Functionally, binds the lower part of the 30S subunit head. Binds mRNA in the 70S ribosome, positioning it for translation. This Ralstonia nicotianae (strain ATCC BAA-1114 / GMI1000) (Ralstonia solanacearum) protein is Small ribosomal subunit protein uS3.